The chain runs to 213 residues: 5-deoxy-D-ribulose 1-phosphate aldolase (213 aa).

Residues 28–29, 45–46, and 74–76 each bind substrate; these read GN, SG, and SSE. Glutamate 76 functions as the Proton donor/acceptor in the catalytic mechanism. Residues glutamate 76, histidine 95, histidine 97, and histidine 157 each coordinate Mn(2+).

The protein belongs to the aldolase class II family. As to quaternary structure, forms homooligomers, possibly homotetramers. Mn(2+) is required as a cofactor.

The catalysed reaction is 5-deoxy-D-ribulose 1-phosphate = dihydroxyacetone phosphate + acetaldehyde. The protein operates within carbohydrate degradation. Functionally, catalyzes the cleavage of 5-deoxy-D-ribulose 1-phosphate to yield dihydroxyacetone phosphate (DHAP) and acetaldehyde, as part of a 5-deoxyribose salvage pathway that recycles this toxic radical SAM enzyme by-product to mainstream metabolites. Is also able to catalyze the reverse reaction, using several aldehydes as substrate, with acetaldehyde being the preferred substrate. The sequence is that of 5-deoxy-D-ribulose 1-phosphate aldolase from Bacillus thuringiensis serovar kurstaki (strain ATCC 35866 / NRRL B-4488 / HD73).